The chain runs to 167 residues: Large ribosomal subunit protein uL10 (167 aa).

It belongs to the universal ribosomal protein uL10 family. Part of the ribosomal stalk of the 50S ribosomal subunit. The N-terminus interacts with L11 and the large rRNA to form the base of the stalk. The C-terminus forms an elongated spine to which L12 dimers bind in a sequential fashion forming a multimeric L10(L12)X complex.

Forms part of the ribosomal stalk, playing a central role in the interaction of the ribosome with GTP-bound translation factors. This chain is Large ribosomal subunit protein uL10, found in Streptococcus thermophilus (strain CNRZ 1066).